We begin with the raw amino-acid sequence, 151 residues long: Large ribosomal subunit protein uL22 (151 aa).

Residues 1–18 (MARINYSINGDPETTSKA) are compositionally biased toward polar residues. Positions 1–23 (MARINYSINGDPETTSKAMGSEL) are disordered.

The protein belongs to the universal ribosomal protein uL22 family. In terms of assembly, part of the 50S ribosomal subunit.

In terms of biological role, this protein binds specifically to 23S rRNA. It makes multiple contacts with different domains of the 23S rRNA in the assembled 50S subunit and ribosome. Its function is as follows. The globular domain of the protein is located near the polypeptide exit tunnel on the outside of the subunit, while an extended beta-hairpin is found that lines the wall of the exit tunnel in the center of the 70S ribosome. This chain is Large ribosomal subunit protein uL22, found in Methanosarcina acetivorans (strain ATCC 35395 / DSM 2834 / JCM 12185 / C2A).